Reading from the N-terminus, the 372-residue chain is Probable arabinan endo-1,5-alpha-L-arabinosidase B (372 aa).

Residues 1–16 form the signal peptide; that stretch reads MTVLVALFCLVTWTLC. Positions 23–34 are enriched in low complexity; the sequence is STQGTQQPQQPE. The disordered stretch occupies residues 23–52; that stretch reads STQGTQQPQQPEKTPHPHPQPEDAFPPTHA. Aspartate 59 acts as the Proton acceptor in catalysis. The N-linked (GlcNAc...) asparagine glycan is linked to asparagine 120. Glutamate 252 acts as the Proton donor in catalysis. Residue asparagine 363 is glycosylated (N-linked (GlcNAc...) asparagine).

This sequence belongs to the glycosyl hydrolase 43 family.

The protein resides in the secreted. It carries out the reaction Endohydrolysis of (1-&gt;5)-alpha-arabinofuranosidic linkages in (1-&gt;5)-arabinans.. It functions in the pathway glycan metabolism; L-arabinan degradation. In terms of biological role, endo-1,5-alpha-L-arabinanase involved in degradation of pectin. Its preferred substrate is linear 1,5-alpha-L-arabinan. The polypeptide is Probable arabinan endo-1,5-alpha-L-arabinosidase B (abnB) (Aspergillus fumigatus (strain ATCC MYA-4609 / CBS 101355 / FGSC A1100 / Af293) (Neosartorya fumigata)).